We begin with the raw amino-acid sequence, 526 residues long: Cytochrome P450 4F5 (526 aa).

Cys470 lines the heme pocket.

Belongs to the cytochrome P450 family. Heme serves as cofactor. As to expression, high expression in liver and kidney. Lower expression in brain.

The protein resides in the endoplasmic reticulum membrane. The protein localises to the microsome membrane. The catalysed reaction is an organic molecule + reduced [NADPH--hemoprotein reductase] + O2 = an alcohol + oxidized [NADPH--hemoprotein reductase] + H2O + H(+). This Rattus norvegicus (Rat) protein is Cytochrome P450 4F5 (Cyp4f5).